The following is a 232-amino-acid chain: Putative homeobox protein NANOG2 (232 aa).

Residues 1-10 show a composition bias toward basic and acidic residues; that stretch reads MDLPIEDSHD. The segment at 1-39 is disordered; the sequence is MDLPIEDSHDSSTSPKGKQPTTAEKSATKKEDKVPVKKQ. Over residues 11–25 the composition is skewed to polar residues; that stretch reads SSTSPKGKQPTTAEK. Over residues 26–35 the composition is skewed to basic and acidic residues; it reads SATKKEDKVP. 8 consecutive repeat copies span residues 123 to 127, 128 to 132, 133 to 137, 143 to 147, 148 to 152, 153 to 157, 158 to 162, and 163 to 167. An 8 X repeats starting with a Trp in each unit region spans residues 123 to 167; it reads WSNQTWNNSIWSNETQNIQSWSNHSWNTQTWCTQSWNNQAWNSPF. A sufficient for transactivation activity region spans residues 123–167; it reads WSNQTWNNSIWSNETQNIQSWSNHSWNTQTWCTQSWNNQAWNSPF. Residues 168–232 are sufficient for strong transactivation activity; it reads YNCGEESLQS…YSTNMQPEDV (65 aa).

It belongs to the Nanog homeobox family.

It is found in the nucleus. Its function is as follows. Probable transcriptional regulator. The polypeptide is Putative homeobox protein NANOG2 (NANOGP1) (Pan troglodytes (Chimpanzee)).